Reading from the N-terminus, the 253-residue chain is Phosphate import ATP-binding protein PstB (253 aa).

The 242-residue stretch at Ile-7–Ile-248 folds into the ABC transporter domain. Gly-39–Ser-46 is a binding site for ATP.

This sequence belongs to the ABC transporter superfamily. Phosphate importer (TC 3.A.1.7) family. The complex is composed of two ATP-binding proteins (PstB), two transmembrane proteins (PstC and PstA) and a solute-binding protein (PstS).

It is found in the cell membrane. It catalyses the reaction phosphate(out) + ATP + H2O = ADP + 2 phosphate(in) + H(+). Part of the ABC transporter complex PstSACB involved in phosphate import. Responsible for energy coupling to the transport system. This is Phosphate import ATP-binding protein PstB from Methanothermobacter thermautotrophicus (strain ATCC 29096 / DSM 1053 / JCM 10044 / NBRC 100330 / Delta H) (Methanobacterium thermoautotrophicum).